The chain runs to 110 residues: Putative membrane protein insertion efficiency factor (110 aa).

This sequence belongs to the UPF0161 family.

It localises to the cell inner membrane. Could be involved in insertion of integral membrane proteins into the membrane. This Campylobacter hominis (strain ATCC BAA-381 / DSM 21671 / CCUG 45161 / LMG 19568 / NCTC 13146 / CH001A) protein is Putative membrane protein insertion efficiency factor.